A 194-amino-acid polypeptide reads, in one-letter code: Cation channel sperm-associated auxiliary subunit zeta (194 aa).

As to quaternary structure, component of the CatSper complex or CatSpermasome composed of the core pore-forming members CATSPER1, CATSPER2, CATSPER3 and CATSPER4 as well as auxiliary members CATSPERB, CATSPERG2, CATSPERD, CATSPERE, CATSPERZ, C2CD6/CATSPERT, SLCO6C1, TMEM249, TMEM262 and EFCAB9. HSPA1 may be an additional auxiliary complex member. The core complex members CATSPER1, CATSPER2, CATSPER3 and CATSPER4 form a heterotetrameric channel. The auxiliary CATSPERB, CATSPERG2, CATSPERD and CATSPERE subunits form a pavilion-like structure over the pore which stabilizes the complex through interactions with CATSPER4, CATSPER3, CATSPER1 and CATSPER2 respectively. SLCO6C1 interacts with CATSPERE and TMEM262/CATSPERH interacts with CATSPERB, further stabilizing the complex. C2CD6/CATSPERT interacts at least with CATSPERD and is required for targeting the CatSper complex in the flagellar membrane. Interacts with EFCAB9; the interaction is direct, Ca(2+)-dependent and connects EFCAB9 with the CatSper complex. Dissociates from EFCAB9 at elevated pH. Testis-specific. Expressed in adult but not in fetal testis. Not expressed in ovary. Within testis, expression is restricted to spermatids.

The protein resides in the cell projection. Its subcellular location is the cilium. It is found in the flagellum membrane. Auxiliary component of the CatSper complex, a complex involved in sperm cell hyperactivation. Sperm cell hyperactivation is needed for sperm motility which is essential late in the preparation of sperm for fertilization. Required for a distribution of the CatSper complex in linear quadrilateral nanodomains along the flagellum, maximizing fertilization inside the mammalian female reproductive tract. Together with EFCAB9, associates with the CatSper channel pore and is required for the two-row structure of each single CatSper channel. The protein is Cation channel sperm-associated auxiliary subunit zeta of Mus musculus (Mouse).